The following is a 285-amino-acid chain: Glutamate racemase (285 aa).

Residues 28-29 (DS) and 60-61 (YG) each bind substrate. Cysteine 92 (proton donor/acceptor) is an active-site residue. 93–94 (NT) serves as a coordination point for substrate. The active-site Proton donor/acceptor is the cysteine 204. Position 205 to 206 (205 to 206 (TH)) interacts with substrate.

This sequence belongs to the aspartate/glutamate racemases family.

The enzyme catalyses L-glutamate = D-glutamate. It functions in the pathway cell wall biogenesis; peptidoglycan biosynthesis. Its function is as follows. Provides the (R)-glutamate required for cell wall biosynthesis. This is Glutamate racemase from Escherichia coli (strain UTI89 / UPEC).